A 399-amino-acid polypeptide reads, in one-letter code: uncharacterized protein (399 aa).

Belongs to the NADH:flavin oxidoreductase/NADH oxidase family. Directly interacts with lipoylated GcvH-L (SpyM50867).

This is an uncharacterized protein from Streptococcus pyogenes serotype M5 (strain Manfredo).